Here is a 308-residue protein sequence, read N- to C-terminus: Elongation factor Ts (308 aa).

Residues 80–83 (TDFV) form an involved in Mg(2+) ion dislocation from EF-Tu region.

This sequence belongs to the EF-Ts family.

Its subcellular location is the cytoplasm. Associates with the EF-Tu.GDP complex and induces the exchange of GDP to GTP. It remains bound to the aminoacyl-tRNA.EF-Tu.GTP complex up to the GTP hydrolysis stage on the ribosome. This Rhodopseudomonas palustris (strain BisB18) protein is Elongation factor Ts.